Consider the following 423-residue polypeptide: MERLTSPPRLMIVSDLDETMVDHHKDPENLALLRFNSLWEDAYRHDSLLVFSTGRAQTMYKKLRKEKPLLTPDVIITSVGTEIAYGNSMVPDDNWVEILNKKWDRGIVQEETSKFPELTLQGETEQRPHKLSFNIDKSKVKAVTKELSPRLEKRGVDVKFIFSGGNAFDVLAKGGGKGQALAYLLKKLKTEGKLPINTLACGDSGNDTELFTIPNVYGVMVSNAQEELLEWYAENAKDNANIIHASERCAGGITQAIGHFKLGPNLSPRDVSDFLECKADNVNPGHEVVKFFLFYERWRRGEVENCTTYTSSLKASCHPSGVFVHPSGAEKSLRDTIDELGKYYGDKKGKKFRVWTDQVLATDTTPGTWIVKLDKWEQTGDERKCCTTTVKFTSKEGEGFVWEHVQQIWSEETEIKDDSNWII.

This sequence belongs to the sucrose phosphatase family. In terms of assembly, homodimer. The cofactor is Mg(2+).

The catalysed reaction is sucrose 6(F)-phosphate + H2O = sucrose + phosphate. It participates in glycan biosynthesis; sucrose biosynthesis; sucrose from D-fructose 6-phosphate and UDP-alpha-D-glucose: step 2/2. Its function is as follows. Catalyzes the final step of sucrose synthesis. This is Probable sucrose-phosphatase 1 (SPP1) from Arabidopsis thaliana (Mouse-ear cress).